Reading from the N-terminus, the 250-residue chain is Tryptophan synthase alpha chain (250 aa).

Catalysis depends on proton acceptor residues E31 and D42.

The protein belongs to the TrpA family. Tetramer of two alpha and two beta chains.

It carries out the reaction (1S,2R)-1-C-(indol-3-yl)glycerol 3-phosphate + L-serine = D-glyceraldehyde 3-phosphate + L-tryptophan + H2O. It functions in the pathway amino-acid biosynthesis; L-tryptophan biosynthesis; L-tryptophan from chorismate: step 5/5. Functionally, the alpha subunit is responsible for the aldol cleavage of indoleglycerol phosphate to indole and glyceraldehyde 3-phosphate. The polypeptide is Tryptophan synthase alpha chain (Staphylococcus carnosus (strain TM300)).